The chain runs to 327 residues: MQSSRKIMILKRNIKGLKSSAIIATYLTLNKLFIDKFCKTQESTYPIHFVHCHFGGIKKFHSHCQLSSSYTNSGQKSFKSFNSLRFIVLKSKTCLLRYKLLIKTFCCITYSKIENLSNTRMARLTAPSKGPSFSNLNKPNDLLKAEIEDNEASHYSQNQSSDSDSDEAPEEVSLKSSSDEVKKRLQRLKGNELQLRKAEREKRRLQNERNRERNAQRVSASKLDLAILEAAEVEEINSTTEIEEKVDEASLDLYTPKGHKIVFPNNEIPKKRTRSFRKGDFKVSVLKETNDPLLAPNYEKKLSQRKRDWINRQSVPRASKRRRPLTY.

Positions 151-218 (EASHYSQNQS…RNRERNAQRV (68 aa)) are disordered. Phosphoserine is present on residues Ser163 and Ser165. Residues 180–219 (EVKKRLQRLKGNELQLRKAEREKRRLQNERNRERNAQRVS) adopt a coiled-coil conformation. Over residues 194-215 (QLRKAEREKRRLQNERNRERNA) the composition is skewed to basic and acidic residues.

The protein belongs to the UTP16 family. In terms of assembly, component of the ribosomal small subunit (SSU) processome.

The protein resides in the nucleus. It is found in the nucleolus. In terms of biological role, functions as part of the small subunit (SSU) processome, first precursor of the small eukaryotic ribosomal subunit that coordinates the first two steps of ribosome biogenesis in transcription of the primary transcript pre-RNA and pre-18S processing. During the assembly of the SSU processome in the nucleolus, many ribosome biogenesis factors, an RNA chaperone and ribosomal proteins associate with the nascent pre-rRNA and work in concert to generate RNA folding, modifications, rearrangements and cleavage as well as targeted degradation of pre-ribosomal RNA by the RNA exosome. In Schizosaccharomyces pombe (strain 972 / ATCC 24843) (Fission yeast), this protein is U3 small nucleolar RNA-associated protein 16 (utp16).